The following is a 309-amino-acid chain: 11-beta-hydroxysteroid dehydrogenase-like 3 (309 aa).

Residues 10–30 (LLLPPLTIIFLFLFYPFYLLI) traverse the membrane as a helical; Signal-anchor for type II membrane protein segment. Residues 54–80 (GASSGIGEHVAYEYAKKGAYLALVARR) and D105 contribute to the NADP(+) site. Residue S184 coordinates substrate. The Proton acceptor role is filled by Y197. NADP(+)-binding positions include 197 to 201 (YAASK) and K201.

It belongs to the short-chain dehydrogenases/reductases (SDR) family.

It localises to the membrane. The protein is 11-beta-hydroxysteroid dehydrogenase-like 3 (HSD3) of Arabidopsis thaliana (Mouse-ear cress).